The primary structure comprises 559 residues: Phenylalanine--tRNA ligase beta subunit (559 aa).

The 77-residue stretch at 274–350 (FEPKIIDVHT…LGYGFNELPA (77 aa)) folds into the B5 domain. Residues Asp328, Asp334, Glu337, and Asn338 each coordinate Mg(2+).

Belongs to the phenylalanyl-tRNA synthetase beta subunit family. Type 2 subfamily. In terms of assembly, tetramer of two alpha and two beta subunits. It depends on Mg(2+) as a cofactor.

The protein localises to the cytoplasm. The enzyme catalyses tRNA(Phe) + L-phenylalanine + ATP = L-phenylalanyl-tRNA(Phe) + AMP + diphosphate + H(+). The protein is Phenylalanine--tRNA ligase beta subunit of Methanosphaera stadtmanae (strain ATCC 43021 / DSM 3091 / JCM 11832 / MCB-3).